We begin with the raw amino-acid sequence, 360 residues long: BOLA class I histocompatibility antigen, alpha chain BL3-6 (360 aa).

Residues 1 to 21 form the signal peptide; the sequence is MGPRALLLLLSGVLILTETRA. An alpha-1 region spans residues 22–111; that stretch reads GSHSLRYFST…LRGYYNQSEA (90 aa). Residues 22-308 are Extracellular-facing; it reads GSHSLRYFST…QPSFLTMGII (287 aa). Residue Asn-107 is glycosylated (N-linked (GlcNAc...) asparagine). Positions 112 to 203 are alpha-2; the sequence is GSHTLQWMSG…ENGKDTLLRA (92 aa). 2 cysteine pairs are disulfide-bonded: Cys-122/Cys-185 and Cys-224/Cys-280. An alpha-3 region spans residues 204–295; sequence DPPKAHVTHH…GLQEPLTLRW (92 aa). The region spanning 206-292 is the Ig-like C1-type domain; sequence PKAHVTHHPI…QHEGLQEPLT (87 aa). The tract at residues 296–308 is connecting peptide; sequence EPPQPSFLTMGII. Residues 309-328 traverse the membrane as a helical segment; sequence VGLVLLVVTGAVVAGVVICM. The Cytoplasmic segment spans residues 329 to 360; sequence KKRSGEKGGNYIQASSSDSAQGSDVSLTVPKV. The disordered stretch occupies residues 340–360; it reads IQASSSDSAQGSDVSLTVPKV. The segment covering 341–354 has biased composition (low complexity); the sequence is QASSSDSAQGSDVS. Ser-351 and Ser-354 each carry phosphoserine.

The protein belongs to the MHC class I family. As to quaternary structure, heterodimer of an alpha chain and a beta chain (beta-2-microglobulin).

The protein resides in the membrane. Involved in the presentation of foreign antigens to the immune system. The polypeptide is BOLA class I histocompatibility antigen, alpha chain BL3-6 (Bos taurus (Bovine)).